Here is a 452-residue protein sequence, read N- to C-terminus: UDP-N-acetylmuramoyl-L-alanine--L-glutamate ligase (452 aa).

ATP is bound at residue 118–124 (GSKGKST).

The protein belongs to the MurCDEF family. MurD2 subfamily.

The protein localises to the cytoplasm. The enzyme catalyses UDP-N-acetyl-alpha-D-muramoyl-L-alanine + L-glutamate + ATP = UDP-N-acetyl-alpha-D-muramoyl-L-alanyl-L-glutamate + ADP + phosphate + H(+). The protein operates within cell wall biogenesis; peptidoglycan biosynthesis. Cell wall formation. Catalyzes the addition of L-glutamate to the nucleotide precursor UDP-N-acetylmuramoyl-L-alanine. The sequence is that of UDP-N-acetylmuramoyl-L-alanine--L-glutamate ligase from Micromonospora sp. (strain ATCC 39149 / NRRL 15099 / SCC 1413).